The sequence spans 404 residues: S-adenosylmethionine synthase (404 aa).

Residue His-17 participates in ATP binding. Asp-19 lines the Mg(2+) pocket. Glu-45 is a binding site for K(+). The L-methionine site is built by Glu-58 and Gln-101. Positions 101 to 111 (QSPDIAMGVDQ) are flexible loop. Residues 177–179 (DGK), 244–245 (RF), Asp-253, 259–260 (RK), Ala-276, and Lys-280 each bind ATP. Asp-253 lines the L-methionine pocket. L-methionine is bound at residue Lys-284.

The protein belongs to the AdoMet synthase family. Homotetramer; dimer of dimers. The cofactor is Mg(2+). Requires K(+) as cofactor.

Its subcellular location is the cytoplasm. The catalysed reaction is L-methionine + ATP + H2O = S-adenosyl-L-methionine + phosphate + diphosphate. Its pathway is amino-acid biosynthesis; S-adenosyl-L-methionine biosynthesis; S-adenosyl-L-methionine from L-methionine: step 1/1. Functionally, catalyzes the formation of S-adenosylmethionine (AdoMet) from methionine and ATP. The overall synthetic reaction is composed of two sequential steps, AdoMet formation and the subsequent tripolyphosphate hydrolysis which occurs prior to release of AdoMet from the enzyme. The protein is S-adenosylmethionine synthase of Geobacillus thermodenitrificans (strain NG80-2).